Consider the following 97-residue polypeptide: Coiled-coil domain-containing protein 167 (97 aa).

Residues 10-79 adopt a coiled-coil conformation; it reads GVALEIDGLE…LRQENRKNML (70 aa). Residues 77-97 traverse the membrane as a helical segment; that stretch reads NMLLSVAIFLLLTVIYAYWAL.

Its subcellular location is the membrane. This is Coiled-coil domain-containing protein 167 (CCDC167) from Bos taurus (Bovine).